The primary structure comprises 63 residues: Cypmaclein (63 aa).

The protein belongs to the GASA family. In terms of tissue distribution, expressed in pollen (at protein level).

The protein is Cypmaclein of Cupressus sempervirens (Italian cypress).